The primary structure comprises 599 residues: Elongation factor 4 (599 aa).

One can recognise a tr-type G domain in the interval 2–184 (KNIRNFSIIA…RLVRDIPPPE (183 aa)). GTP-binding positions include 14-19 (DHGKST) and 131-134 (NKID).

It belongs to the TRAFAC class translation factor GTPase superfamily. Classic translation factor GTPase family. LepA subfamily.

The protein resides in the cell inner membrane. It carries out the reaction GTP + H2O = GDP + phosphate + H(+). Functionally, required for accurate and efficient protein synthesis under certain stress conditions. May act as a fidelity factor of the translation reaction, by catalyzing a one-codon backward translocation of tRNAs on improperly translocated ribosomes. Back-translocation proceeds from a post-translocation (POST) complex to a pre-translocation (PRE) complex, thus giving elongation factor G a second chance to translocate the tRNAs correctly. Binds to ribosomes in a GTP-dependent manner. The polypeptide is Elongation factor 4 (Sodalis glossinidius (strain morsitans)).